The sequence spans 474 residues: HTH-type transcriptional regulator RamB (474 aa).

One can recognise an HTH cro/C1-type domain in the interval 10-64; the sequence is VRQLRNERGFSQAALAQMLEISPSYLNQIEHDVRPLTVAVLLRITEVFGVDATFF. The segment at residues 21 to 40 is a DNA-binding region (H-T-H motif); that stretch reads QAALAQMLEISPSYLNQIEH.

The protein belongs to the short-chain fatty acyl-CoA assimilation regulator (ScfR) family.

In terms of biological role, involved in the control of the glyoxylate cycle. RamB negatively controls the expression of icl expression during growth on acetate as the sole carbon source. In Mycobacterium tuberculosis (strain CDC 1551 / Oshkosh), this protein is HTH-type transcriptional regulator RamB.